The following is a 261-amino-acid chain: Uridine-cytidine kinase 2 (261 aa).

Polar residues predominate over residues 1-16 (MAGDSEQTLQNHQQPN). The interval 1–24 (MAGDSEQTLQNHQQPNGGEPFLIG) is disordered. The residue at position 2 (alanine 2) is an N-acetylalanine. 27 to 35 (GGTASGKSS) provides a ligand contact to ATP. Residues aspartate 84, tyrosine 112, histidine 117, arginine 166, arginine 176, and glutamine 184 each contribute to the substrate site. Residue aspartate 213 participates in ATP binding. The tract at residues 236-261 (RQTNGCLNGYTPSRKRQASESSSRPH) is disordered. A Phosphoserine modification is found at serine 254.

Belongs to the uridine kinase family. As to quaternary structure, homotetramer. According to PubMed:8812458; testis-specific. According to PubMed:11306702, placenta-specific.

The enzyme catalyses uridine + ATP = UMP + ADP + H(+). It catalyses the reaction cytidine + ATP = CMP + ADP + H(+). Its pathway is pyrimidine metabolism; CTP biosynthesis via salvage pathway; CTP from cytidine: step 1/3. It participates in pyrimidine metabolism; UMP biosynthesis via salvage pathway; UMP from uridine: step 1/1. In terms of biological role, phosphorylates uridine and cytidine to uridine monophosphate and cytidine monophosphate. Does not phosphorylate deoxyribonucleosides or purine ribonucleosides. Can use ATP or GTP as a phosphate donor. Can also phosphorylate cytidine and uridine nucleoside analogs such as 6-azauridine, 5-fluorouridine, 4-thiouridine, 5-bromouridine, N(4)-acetylcytidine, N(4)-benzoylcytidine, 5-fluorocytidine, 2-thiocytidine, 5-methylcytidine, and N(4)-anisoylcytidine. This Homo sapiens (Human) protein is Uridine-cytidine kinase 2 (UCK2).